A 356-amino-acid polypeptide reads, in one-letter code: UDP-N-acetylglucosamine--N-acetylmuramyl-(pentapeptide) pyrophosphoryl-undecaprenol N-acetylglucosamine transferase (356 aa).

Residues 12-14, N124, R163, S188, I242, and Q287 contribute to the UDP-N-acetyl-alpha-D-glucosamine site; that span reads TGG.

This sequence belongs to the glycosyltransferase 28 family. MurG subfamily.

It is found in the cell inner membrane. It carries out the reaction di-trans,octa-cis-undecaprenyl diphospho-N-acetyl-alpha-D-muramoyl-L-alanyl-D-glutamyl-meso-2,6-diaminopimeloyl-D-alanyl-D-alanine + UDP-N-acetyl-alpha-D-glucosamine = di-trans,octa-cis-undecaprenyl diphospho-[N-acetyl-alpha-D-glucosaminyl-(1-&gt;4)]-N-acetyl-alpha-D-muramoyl-L-alanyl-D-glutamyl-meso-2,6-diaminopimeloyl-D-alanyl-D-alanine + UDP + H(+). It participates in cell wall biogenesis; peptidoglycan biosynthesis. In terms of biological role, cell wall formation. Catalyzes the transfer of a GlcNAc subunit on undecaprenyl-pyrophosphoryl-MurNAc-pentapeptide (lipid intermediate I) to form undecaprenyl-pyrophosphoryl-MurNAc-(pentapeptide)GlcNAc (lipid intermediate II). The sequence is that of UDP-N-acetylglucosamine--N-acetylmuramyl-(pentapeptide) pyrophosphoryl-undecaprenol N-acetylglucosamine transferase from Pseudomonas savastanoi pv. phaseolicola (strain 1448A / Race 6) (Pseudomonas syringae pv. phaseolicola (strain 1448A / Race 6)).